The primary structure comprises 603 residues: MSIRRLPETLVNRIAAGEVVERPAAALKELVENAIDAGATRIAVRIAEGGIARLEVEDDGCGMTAADMVLALERHATSKLPDDAIEAVTTLGFRGEALPSIASVARLTLESRTAGGDGWRRVVDNGAVVAEGPAALGQGTRVIVEHLFARVPARRKFLRSARSEYAACLDVVRRLAMARPDVGFTLEHDGRRVLDVQGGQDRVGRVAALTSRDLAANSIGVDLDRGEVHLGGVISLPTYNRGIADHQYLFVNGRPVKDRLLVGALRGAYADLLARDRHPVVALFLDVPTGEVDVNVHPAKTEVRFRDPQLIRGMIVGGLRRALDEHGFRSVQKPAEAALAAWQQEPVAPPPATGFLFDRRAGAAVHPFAAEVSLPAADVARVYDRLMPFTAPAPLAGRAEVAATPPPAAEAHPLGIARGQIAKTYIVAEAEDGLVIVDQHAAHERLVLETLKRGMAGQAVPSQGLLIPEVVELDEPACDRLEAAADGLAALGVELERFGPGAVMVRATPAMLGAIDCHRLVTDIADDLAGYDAALGLNERLELVAATMACHGSVRAGRTLSVAEMNALLRQMEVTPHSGQCNHGRPTWVKLAMGDVERLFGRK.

The protein belongs to the DNA mismatch repair MutL/HexB family.

Its function is as follows. This protein is involved in the repair of mismatches in DNA. It is required for dam-dependent methyl-directed DNA mismatch repair. May act as a 'molecular matchmaker', a protein that promotes the formation of a stable complex between two or more DNA-binding proteins in an ATP-dependent manner without itself being part of a final effector complex. The chain is DNA mismatch repair protein MutL from Sphingopyxis alaskensis (strain DSM 13593 / LMG 18877 / RB2256) (Sphingomonas alaskensis).